The following is a 443-amino-acid chain: Ribulose bisphosphate carboxylase large chain (443 aa).

Residues asparagine 89 and threonine 139 each contribute to the substrate site. Lysine 141 acts as the Proton acceptor in catalysis. Lysine 143 lines the substrate pocket. Mg(2+)-binding residues include lysine 167, aspartate 169, and glutamate 170. Lysine 167 carries the N6-carboxylysine modification. Histidine 260 functions as the Proton acceptor in the catalytic mechanism. Substrate contacts are provided by arginine 261, histidine 293, and serine 345.

The protein belongs to the RuBisCO large chain family. Type I subfamily. In terms of assembly, heterohexadecamer of 8 large chains and 8 small chains; disulfide-linked. The disulfide link is formed within the large subunit homodimers. It depends on Mg(2+) as a cofactor. In terms of processing, the disulfide bond which can form in the large chain dimeric partners within the hexadecamer appears to be associated with oxidative stress and protein turnover.

The protein localises to the plastid. It localises to the chloroplast. The enzyme catalyses 2 (2R)-3-phosphoglycerate + 2 H(+) = D-ribulose 1,5-bisphosphate + CO2 + H2O. It carries out the reaction D-ribulose 1,5-bisphosphate + O2 = 2-phosphoglycolate + (2R)-3-phosphoglycerate + 2 H(+). Its function is as follows. RuBisCO catalyzes two reactions: the carboxylation of D-ribulose 1,5-bisphosphate, the primary event in carbon dioxide fixation, as well as the oxidative fragmentation of the pentose substrate in the photorespiration process. Both reactions occur simultaneously and in competition at the same active site. This is Ribulose bisphosphate carboxylase large chain from Antirrhinum majus (Garden snapdragon).